We begin with the raw amino-acid sequence, 165 residues long: MAEYINPNALGDLEENVVSINRVTKVVKGGRRLRFSALVIVGDRNGHVGFGTGKAQEVPEAIRKAVEDAKRHLIKVPTVGTTIPHQVLGVDGGGKVLLKPASEGSGVAAGGSTRPIMELAGIPDVTAKSLGSSTAVNVVRATFDGLKNLKEAKVVAALRGVSLGE.

The region spanning 13–76 is the S5 DRBM domain; sequence LEENVVSINR…EDAKRHLIKV (64 aa).

Belongs to the universal ribosomal protein uS5 family. As to quaternary structure, part of the 30S ribosomal subunit. Contacts proteins S4 and S8.

Its function is as follows. With S4 and S12 plays an important role in translational accuracy. Functionally, located at the back of the 30S subunit body where it stabilizes the conformation of the head with respect to the body. This Oenococcus oeni (strain ATCC BAA-331 / PSU-1) protein is Small ribosomal subunit protein uS5.